We begin with the raw amino-acid sequence, 210 residues long: Peptidyl-tRNA hydrolase (210 aa).

Tyr14 lines the tRNA pocket. The active-site Proton acceptor is His19. Residues Phe64, Asn66, and Asn112 each contribute to the tRNA site.

The protein belongs to the PTH family. In terms of assembly, monomer.

The protein localises to the cytoplasm. The enzyme catalyses an N-acyl-L-alpha-aminoacyl-tRNA + H2O = an N-acyl-L-amino acid + a tRNA + H(+). Functionally, hydrolyzes ribosome-free peptidyl-tRNAs (with 1 or more amino acids incorporated), which drop off the ribosome during protein synthesis, or as a result of ribosome stalling. Catalyzes the release of premature peptidyl moieties from peptidyl-tRNA molecules trapped in stalled 50S ribosomal subunits, and thus maintains levels of free tRNAs and 50S ribosomes. The polypeptide is Peptidyl-tRNA hydrolase (Methylorubrum extorquens (strain CM4 / NCIMB 13688) (Methylobacterium extorquens)).